The following is a 442-amino-acid chain: CBL-interacting serine/threonine-protein kinase 14 (442 aa).

The region spanning 22 to 276 (YEVGKLVGCG…IEEIIHDPWF (255 aa)) is the Protein kinase domain. ATP contacts are provided by residues 28–36 (VGCGAFAKV) and K51. D144 functions as the Proton acceptor in the catalytic mechanism. The interval 162 to 191 (DFGLSALTDQIRPDGLLHTLCGTPAYVAPE) is activation loop. S166 carries the post-translational modification Phosphoserine. The residue at position 180 (T180) is a Phosphothreonine. The region spanning 305–329 (MGARRMNAFDIISGSPGFNLSGLFG) is the NAF domain. The interval 335–365 (DRVERFVSAWTAERVVERLEEIVSAENLTVA) is PPI.

This sequence belongs to the protein kinase superfamily. CAMK Ser/Thr protein kinase family. SNF1 subfamily. In terms of assembly, interacts with CBL2. Interacts with CBL3. Interacts with CBL8. Interacts with CBL9. Interacts with KIN10 and KIN11. It depends on Mn(2+) as a cofactor. In terms of tissue distribution, predominant in roots, cauline leaves, and flowers. Ubiquitous with highest expression in 7-day-old seedlings and flower buds, followed by that in cauline leaves and young siliques.

It localises to the cytoplasm. The protein resides in the nucleus. The catalysed reaction is L-seryl-[protein] + ATP = O-phospho-L-seryl-[protein] + ADP + H(+). It catalyses the reaction L-threonyl-[protein] + ATP = O-phospho-L-threonyl-[protein] + ADP + H(+). CIPK serine-threonine protein kinases interact with CBL proteins. Binding of a CBL protein to the regulatory NAF domain of CIPK protein lead to the activation of the kinase in a calcium-dependent manner. This is CBL-interacting serine/threonine-protein kinase 14 (CIPK14) from Arabidopsis thaliana (Mouse-ear cress).